Consider the following 153-residue polypeptide: Glucose-6-phosphate 1-dehydrogenase (153 aa).

Residues Arg-21 and Lys-120 each contribute to the NADP(+) site. Lys-120 lines the D-glucose 6-phosphate pocket.

This sequence belongs to the glucose-6-phosphate dehydrogenase family.

The protein resides in the cytoplasm. Its subcellular location is the cytosol. The catalysed reaction is D-glucose 6-phosphate + NADP(+) = 6-phospho-D-glucono-1,5-lactone + NADPH + H(+). The protein operates within carbohydrate degradation; pentose phosphate pathway; D-ribulose 5-phosphate from D-glucose 6-phosphate (oxidative stage): step 1/3. Cytosolic glucose-6-phosphate dehydrogenase that catalyzes the first and rate-limiting step of the oxidative branch within the pentose phosphate pathway/shunt, an alternative route to glycolysis for the dissimilation of carbohydrates and a major source of reducing power and metabolic intermediates for fatty acid and nucleic acid biosynthetic processes. In Sarcophaga bullata (Grey flesh fly), this protein is Glucose-6-phosphate 1-dehydrogenase (ZW).